Consider the following 171-residue polypeptide: Apoptosis regulator Bcl-2 homolog (171 aa).

In terms of assembly, interacts with host BECN1; this interaction inhibits host autophagy. Interacts with host BAK1 and BAX.

The protein resides in the host cytoplasm. Plays a role in the protection against apoptosis mediated by cytotoxic cells during the immune response to acute and persistent viral infection. Contributes therefore to latency establishment. Plays also a role in the inhibition of host starvation-induced autophagy which ultimately contributes to the viral chronic infection. This is Apoptosis regulator Bcl-2 homolog (vBCL2) from Murid herpesvirus 4 (MuHV-4).